We begin with the raw amino-acid sequence, 83 residues long: Calsensin (83 aa).

EF-hand domains lie at 4–39 (KVKA…LDAY) and 46–81 (KVKE…LLCQ). Positions 17, 19, 21, 23, 28, 59, 61, 63, 65, and 70 each coordinate Ca(2+).

In terms of tissue distribution, selectively expressed in a small group of neurons.

Its subcellular location is the cytoplasm. Functionally, may function as a trigger protein which interacts with a larger protein. May mediate calcium-dependent signal transduction events in the growth cones and axons of a small group of sensory neurons which fasciculate in a single axon tract. In Haemopis marmorata (Green horse leech), this protein is Calsensin.